The primary structure comprises 235 residues: Probable transcriptional regulatory protein Cla_1081 (235 aa).

This sequence belongs to the TACO1 family.

The protein resides in the cytoplasm. The polypeptide is Probable transcriptional regulatory protein Cla_1081 (Campylobacter lari (strain RM2100 / D67 / ATCC BAA-1060)).